The sequence spans 99 residues: Thylakoid membrane protein ssl2009 (99 aa).

Residues 10 to 30 (GFLLGTVIGGVVGGILGSVLA) traverse the membrane as a helical segment. Residues 50 to 84 (NLDSEENIELARRRLEDKIAQLNLVIDDVRDQLGH) adopt a coiled-coil conformation.

It localises to the cellular thylakoid membrane. This is Thylakoid membrane protein ssl2009 from Synechocystis sp. (strain ATCC 27184 / PCC 6803 / Kazusa).